The primary structure comprises 237 residues: Large ribosomal subunit protein uL1 (237 aa).

It belongs to the universal ribosomal protein uL1 family. As to quaternary structure, part of the 50S ribosomal subunit.

Its function is as follows. Binds directly to 23S rRNA. The L1 stalk is quite mobile in the ribosome, and is involved in E site tRNA release. Functionally, protein L1 is also a translational repressor protein, it controls the translation of the L11 operon by binding to its mRNA. The polypeptide is Large ribosomal subunit protein uL1 (Chloroflexus aurantiacus (strain ATCC 29364 / DSM 637 / Y-400-fl)).